Here is a 217-residue protein sequence, read N- to C-terminus: Leucyl/phenylalanyl-tRNA--protein transferase (217 aa).

The protein belongs to the L/F-transferase family.

It localises to the cytoplasm. It catalyses the reaction N-terminal L-lysyl-[protein] + L-leucyl-tRNA(Leu) = N-terminal L-leucyl-L-lysyl-[protein] + tRNA(Leu) + H(+). It carries out the reaction N-terminal L-arginyl-[protein] + L-leucyl-tRNA(Leu) = N-terminal L-leucyl-L-arginyl-[protein] + tRNA(Leu) + H(+). The catalysed reaction is L-phenylalanyl-tRNA(Phe) + an N-terminal L-alpha-aminoacyl-[protein] = an N-terminal L-phenylalanyl-L-alpha-aminoacyl-[protein] + tRNA(Phe). In terms of biological role, functions in the N-end rule pathway of protein degradation where it conjugates Leu, Phe and, less efficiently, Met from aminoacyl-tRNAs to the N-termini of proteins containing an N-terminal arginine or lysine. The sequence is that of Leucyl/phenylalanyl-tRNA--protein transferase from Caulobacter vibrioides (strain ATCC 19089 / CIP 103742 / CB 15) (Caulobacter crescentus).